A 510-amino-acid chain; its full sequence is tRNA-2-methylthio-N(6)-dimethylallyladenosine synthase (510 aa).

The MTTase N-terminal domain occupies 19 to 135; sequence RTFEVRTYGC…LPALLDRARH (117 aa). Positions 28, 64, 98, 172, 176, and 179 each coordinate [4Fe-4S] cluster. Residues 158-394 enclose the Radical SAM core domain; sequence RESSYAAWVS…IELQERISLE (237 aa). The 71-residue stretch at 397 to 467 folds into the TRAM domain; that stretch reads TAQIGRRVEL…PHHLIADAGL (71 aa). Residues 477 to 510 form a disordered region; that stretch reads DAHAAGQKPRTGVGLGMPAVGAPDPLPATTGCAR.

The protein belongs to the methylthiotransferase family. MiaB subfamily. In terms of assembly, monomer. [4Fe-4S] cluster serves as cofactor.

It localises to the cytoplasm. It catalyses the reaction N(6)-dimethylallyladenosine(37) in tRNA + (sulfur carrier)-SH + AH2 + 2 S-adenosyl-L-methionine = 2-methylsulfanyl-N(6)-dimethylallyladenosine(37) in tRNA + (sulfur carrier)-H + 5'-deoxyadenosine + L-methionine + A + S-adenosyl-L-homocysteine + 2 H(+). Catalyzes the methylthiolation of N6-(dimethylallyl)adenosine (i(6)A), leading to the formation of 2-methylthio-N6-(dimethylallyl)adenosine (ms(2)i(6)A) at position 37 in tRNAs that read codons beginning with uridine. In Mycolicibacterium vanbaalenii (strain DSM 7251 / JCM 13017 / BCRC 16820 / KCTC 9966 / NRRL B-24157 / PYR-1) (Mycobacterium vanbaalenii), this protein is tRNA-2-methylthio-N(6)-dimethylallyladenosine synthase.